Here is a 331-residue protein sequence, read N- to C-terminus: GTP 3',8-cyclase 2 (331 aa).

Residues 9–234 (PFGRRITYLR…PSLARSGGPS (226 aa)) form the Radical SAM core domain. Residue Arg18 participates in GTP binding. [4Fe-4S] cluster-binding residues include Cys25 and Cys29. Tyr31 contributes to the S-adenosyl-L-methionine binding site. Cys32 provides a ligand contact to [4Fe-4S] cluster. Arg67 is a GTP binding site. Gly71 serves as a coordination point for S-adenosyl-L-methionine. Thr98 serves as a coordination point for GTP. An S-adenosyl-L-methionine-binding site is contributed by Ser122. Residue Lys159 coordinates GTP. Met193 serves as a coordination point for S-adenosyl-L-methionine. [4Fe-4S] cluster contacts are provided by Cys257 and Cys260. 262 to 264 (RVR) lines the GTP pocket. Cys274 contributes to the [4Fe-4S] cluster binding site.

This sequence belongs to the radical SAM superfamily. MoaA family. In terms of assembly, monomer and homodimer. The cofactor is [4Fe-4S] cluster.

The enzyme catalyses GTP + AH2 + S-adenosyl-L-methionine = (8S)-3',8-cyclo-7,8-dihydroguanosine 5'-triphosphate + 5'-deoxyadenosine + L-methionine + A + H(+). It participates in cofactor biosynthesis; molybdopterin biosynthesis. Catalyzes the cyclization of GTP to (8S)-3',8-cyclo-7,8-dihydroguanosine 5'-triphosphate. The polypeptide is GTP 3',8-cyclase 2 (moaA2) (Pseudomonas aeruginosa (strain ATCC 15692 / DSM 22644 / CIP 104116 / JCM 14847 / LMG 12228 / 1C / PRS 101 / PAO1)).